A 210-amino-acid chain; its full sequence is Glutathione S-transferase-like protein FUS3 (210 aa).

The region spanning 1 to 74 (MPNARVFKIL…YVAQSGPQAS (74 aa)) is the GST N-terminal domain. The region spanning 80–206 (DAMSSAKIRQ…GKPNFIEKRR (127 aa)) is the GST C-terminal domain.

It belongs to the GST superfamily.

Glutathione S-transferase-like protein; part of the gene cluster that mediates the biosynthesis of the mycotoxin fusarin C. Within the cluster, FUS1, FUS2, FUS8 and FUS9 are sufficient for fusarin production. The other FUS cluster members are not essential for fusarin C biosynthesis. This is Glutathione S-transferase-like protein FUS3 from Gibberella fujikuroi (strain CBS 195.34 / IMI 58289 / NRRL A-6831) (Bakanae and foot rot disease fungus).